Consider the following 210-residue polypeptide: Thymidylate kinase (210 aa).

DGMP is bound at residue Asp17. Asp17 serves as a coordination point for dTMP. The ATP site is built by Arg18, Ser19, Gly20, Lys21, Ser22, and Thr23. Arg47, Phe74, Arg78, Arg99, and Tyr107 together coordinate dTMP. Positions 74, 78, 99, 107, 108, and 153 each coordinate dGMP. The segment at 143-155 (QNRSDYGEEIYEK) is LID. Arg182 contacts ATP.

Belongs to the thymidylate kinase family. Homodimer. Binds two dTMP molecules per dimer. Binds only one dTGP molecule per dimer.

The enzyme catalyses dTMP + ATP = dTDP + ADP. The catalysed reaction is dGMP + ATP = dGDP + ADP. Its pathway is pyrimidine metabolism; dTTP biosynthesis. Inhibited by deoxyguanosine (dG), deoxythymidine (dT) and azidothymidine (AZT). Functionally, catalyzes the phosphorylation of thymidine monophosphate (dTMP) to thymidine diphosphate (dTDP), the immediate precursor for the DNA building block dTTP. Can also phosphorylate dGMP and to a lesser extent GMP, dUMP and dIMP. Can use either ATP or dATP as phosphate donors in presence of Mg(2+). The sequence is that of Thymidylate kinase from Plasmodium falciparum (isolate 3D7).